A 345-amino-acid chain; its full sequence is UDP-N-acetylenolpyruvoylglucosamine reductase (345 aa).

Residues 25–193 (LPAHCTDFVS…VGVTFLLPKA (169 aa)) form the FAD-binding PCMH-type domain. Arginine 169 is a catalytic residue. Serine 237 acts as the Proton donor in catalysis. The active site involves glutamate 333.

Belongs to the MurB family. FAD is required as a cofactor.

It localises to the cytoplasm. It carries out the reaction UDP-N-acetyl-alpha-D-muramate + NADP(+) = UDP-N-acetyl-3-O-(1-carboxyvinyl)-alpha-D-glucosamine + NADPH + H(+). It functions in the pathway cell wall biogenesis; peptidoglycan biosynthesis. Its function is as follows. Cell wall formation. The sequence is that of UDP-N-acetylenolpyruvoylglucosamine reductase from Pseudoalteromonas atlantica (strain T6c / ATCC BAA-1087).